The sequence spans 426 residues: MANIEIPYGKSKLAFDLPDERIQGILRSKAGSYKVNMSEEDIVKRALENPIGTKRLQDLAEGKKNIVIITSDHTRPVPSRITLPLLLDEIRKKNKSANVKILIATGFHRGTTLQEMKAKFGEDLVENEQFVVHDSRNSENMELIGTLPSGGKLEINKLAVEADLLVAEGFIEPHFFAGFSGGRKSILPGIASVQCILANHCSEFIKNPYARTGVLENNPIHRDMIYAAKKANLAFILNVVIDSSHKIVNAFAGHSEKAHLKGCEFVSEIATVNAKPADIVITSNGGYPLDQNIYQSVKGMTAGEAACKDGGVIIIAAECADGHGGEGFYRWFKESKDPQDVMNKILSRGRDETLPDQWEAQILARILINHKVIMVTDSKNYEYVKDMFMTPAKDLGEALKIAESIVNNDSKINVIPDGVSVIVREK.

72–75 (DHTR) is a Ni(II)-pyridinium-3,5-bisthiocarboxylate mononucleotide binding site. Active-site proton donor/acceptor residues include histidine 108 and histidine 174. Residues lysine 184 and histidine 200 each coordinate Ni(II)-pyridinium-3,5-bisthiocarboxylate mononucleotide. Substrate contacts are provided by glutamine 295 and lysine 298.

The protein belongs to the lactate racemase family. In terms of assembly, homodimer. Ni(II)-pyridinium-3,5-bisthiocarboxylate mononucleotide serves as cofactor.

It carries out the reaction (S)-lactate = (R)-lactate. Its activity is regulated as follows. Activation of the apo-enzyme requires the three accessory proteins LarB, LarE and LarC, that are involved in the biosynthesis of the nickel-pincer cofactor of LarA. Its function is as follows. Catalyzes the interconversion between the D- and L-isomers of lactate. This chain is Lactate racemase, found in Thermoanaerobacterium thermosaccharolyticum (strain ATCC 7956 / DSM 571 / NCIMB 9385 / NCA 3814 / NCTC 13789 / WDCM 00135 / 2032) (Clostridium thermosaccharolyticum).